The chain runs to 145 residues: Bacilliredoxin SSP1241 (145 aa).

Belongs to the bacilliredoxin family.

The chain is Bacilliredoxin SSP1241 from Staphylococcus saprophyticus subsp. saprophyticus (strain ATCC 15305 / DSM 20229 / NCIMB 8711 / NCTC 7292 / S-41).